A 607-amino-acid polypeptide reads, in one-letter code: MPMFPEKILQSTPHKPGVYLMLDAKARVIYVGKAKDLVKRLTSYTRHSSSEHNKTTVMLKKVEQVKTIITTTEKEALILEASLIKKHKPRYNIILRDDKNYPYIAVTVGEEWPRVMMVRRKRRDNSRYFGPYSSATAMWATLKLIASLFPLRNCRGEKLRPRTRPCLNRQIGKCLAPCTGNVSRKIYMENVDKILLLLQGKSRDLLAELKRQMLQASERLNFEQAGQFRDQIRALKTTLEKQLVAAGHGKNQDVFGYVRSGTTVAVNILFVRDGLVSGSRSFFIEDYFGLDSQVLSQTISQYYDRETPPPKEILLPFSPENFELLSEYLADFTTHILQIKIPQRGDSTILVEMANTNARQLFAEKEKKERSWQSLGKSIKEKLQLSRTPETIECLDISNISGQHAIGSLVCFSGGEANKSRFRHYKIRTIEGPDDYGMMREVMERRFKRGIKEGNLPNLFVVDGGKGQLGMAMAVARELGITNELDWIGIAKERHEEGEKLYKPGRKNPILLPAHSPVLLYLMRIRDESHRYGITFHRKLRNRATLSSELDEIEGIGDNRKKLLLKKIGSLKKIKEASLQKLQEVEGIGPLLAKKIYTSLQRDKNKS.

Positions 14–93 (HKPGVYLMLD…IKKHKPRYNI (80 aa)) constitute a GIY-YIG domain. Positions 203 to 238 (RDLLAELKRQMLQASERLNFEQAGQFRDQIRALKTT) constitute a UVR domain.

Belongs to the UvrC family. In terms of assembly, interacts with UvrB in an incision complex.

It is found in the cytoplasm. The UvrABC repair system catalyzes the recognition and processing of DNA lesions. UvrC both incises the 5' and 3' sides of the lesion. The N-terminal half is responsible for the 3' incision and the C-terminal half is responsible for the 5' incision. This Desulfotalea psychrophila (strain LSv54 / DSM 12343) protein is UvrABC system protein C.